The primary structure comprises 392 residues: Flagellar P-ring protein (392 aa).

The N-terminal stretch at 1-38 (MKPFARRALLTAEPIRALLLAASLLAATLGLMPAEAFG) is a signal peptide.

It belongs to the FlgI family. As to quaternary structure, the basal body constitutes a major portion of the flagellar organelle and consists of four rings (L,P,S, and M) mounted on a central rod.

It localises to the periplasm. The protein localises to the bacterial flagellum basal body. In terms of biological role, assembles around the rod to form the L-ring and probably protects the motor/basal body from shearing forces during rotation. The sequence is that of Flagellar P-ring protein from Paramagnetospirillum magneticum (strain ATCC 700264 / AMB-1) (Magnetospirillum magneticum).